Here is a 678-residue protein sequence, read N- to C-terminus: Serine/threonine-protein kinase PLK (678 aa).

One can recognise a Protein kinase domain in the interval 22 to 309; sequence YRPGKLLGKG…VKECLDHSWL (288 aa). ATP-binding positions include 28 to 36 and Lys51; that span reads LGKGGFAYV. Asp145 acts as the Proton acceptor in catalysis. Residues Thr179 and Thr183 each carry the phosphothreonine; by autocatalysis modification. POLO box domains follow at residues 435 to 516 and 563 to 644; these read YIMS…YLEN and FLKK…IIKA. The disordered stretch occupies residues 658–678; the sequence is KDSTKKSASGSSTRQLGQGGE. A compositionally biased stretch (polar residues) spans 663–678; the sequence is KSASGSSTRQLGQGGE.

It belongs to the protein kinase superfamily. Ser/Thr protein kinase family. CDC5/Polo subfamily. Interacts with Kin-13. Autophosphorylated. Autophosphorylation is critical for its function in cell growth, cytokinesis and formation of flagella.

It is found in the cell projection. Its subcellular location is the cilium. The protein resides in the flagellum. It localises to the cytoplasm. The protein localises to the cytoskeleton. It is found in the flagellum basal body. Its subcellular location is the flagellum axoneme. The protein resides in the spindle. It localises to the membrane. It catalyses the reaction L-seryl-[protein] + ATP = O-phospho-L-seryl-[protein] + ADP + H(+). The enzyme catalyses L-threonyl-[protein] + ATP = O-phospho-L-threonyl-[protein] + ADP + H(+). Inhibited by GW843286X (GW), an ATP-competitive inhibitor. Inhibition leads to reduced growth, increased number of cells with more than four nuclei, increased number of cells with condensed nuclei, cell cycle arrest at G2/M or G1/S phase depending on the treatment time with GW, and increased length of membrane-bound portions of the caudal and anterior flagella. In terms of biological role, involved in cell cycle. Involved in cell division. Involved in cytokinesis. Involved in flagella biogenesis and in regulation of flagella length in interphase. Involved in formation of median bodies during interphase. Phosphorylates Kin-13 in vitro. Likely regulates microtubule (MT) depolymerizing activity of Kin-13. This is Serine/threonine-protein kinase PLK from Giardia intestinalis (strain ATCC 50803 / WB clone C6) (Giardia lamblia).